Here is a 746-residue protein sequence, read N- to C-terminus: Catalase-peroxidase (746 aa).

A compositionally biased stretch (polar residues) spans 1–20; that stretch reads MSSDTSSSRPPQPDSGTASK. The disordered stretch occupies residues 1–42; it reads MSSDTSSSRPPQPDSGTASKSESENPAIPSPKPKAHAPLTNR. The tryptophyl-tyrosyl-methioninium (Trp-Tyr) (with M-262) cross-link spans 113-236; the sequence is WHAAGTYRIH…YGATTMGLIY (124 aa). His-114 serves as the catalytic Proton acceptor. Positions 236-262 form a cross-link, tryptophyl-tyrosyl-methioninium (Tyr-Met) (with W-113); the sequence is YVNPEGPEGKPDPIAAAIDIRETFGRM. Residue His-277 coordinates heme b.

This sequence belongs to the peroxidase family. Peroxidase/catalase subfamily. As to quaternary structure, homodimer or homotetramer. Heme b serves as cofactor. In terms of processing, formation of the three residue Trp-Tyr-Met cross-link is important for the catalase, but not the peroxidase activity of the enzyme.

It catalyses the reaction H2O2 + AH2 = A + 2 H2O. The enzyme catalyses 2 H2O2 = O2 + 2 H2O. Its function is as follows. Bifunctional enzyme with both catalase and broad-spectrum peroxidase activity. May play a role in the intracellular survival of mycobacteria. In Mycobacterium intracellulare, this protein is Catalase-peroxidase.